A 560-amino-acid chain; its full sequence is Thermosome subunit 1 (560 aa).

The segment at 525 to 550 is disordered; the sequence is LSGGQTGSDDDDGGAPGGMGGGMGGM. Over residues 538–550 the composition is skewed to gly residues; the sequence is GAPGGMGGGMGGM.

This sequence belongs to the TCP-1 chaperonin family. The thermosome or CCT complex is a oligomeric complex of two octameric double-ring structures; the complex is probably a heterooligomer of CCT1, CCT2 and CCT3 with yet unknown stoichiometry.

In terms of biological role, molecular chaperone that assists in the folding or refolding of nascent or denatured proteins along with ATP hydrolysis. ATPase activity is highest in thermosome assemblies containing CCT1:CCT2, followed by assemblies containing CCT1:CCT2:CCT3. Required for thermosome ATPase activity. Not required for growth. In Haloferax volcanii (strain ATCC 29605 / DSM 3757 / JCM 8879 / NBRC 14742 / NCIMB 2012 / VKM B-1768 / DS2) (Halobacterium volcanii), this protein is Thermosome subunit 1 (cct1).